The primary structure comprises 859 residues: MYMSTDEIRRAFLAFFESKGHQIVESSSLVPANDPTLLFTNAGMNQFKDCFLGSEKRNYTRATTAQRCVRAGGKHNDLENVGFTARHHTFFEMLGNFSFGDYFKQDAIKYAWEFLTERLELPADRLLVTVYETDDEAFEIWNKEMGIPADRIVRIGDNKGAPYASDNFWQMGDTGPCGPCTEIFYDHGEHIWGGRPGTPEEDGDRFIEIWNNVFMQFNRHADGTMEPLPKPSVDTGMGIERIAAIMQGVHSNYEIDIFQTLIKEAAKVIGYDDLSNQSLRVVADHIRSCSYLIVDGVMPSNEGRGYVLRRIIRRAVRHGNKLGAKGSYFYKLVGPLAEIMGTAGEELKKQQALVEKVLKIEEENFGRTLERGMAILNEALDNLEGTVLDGETVFKLYDTYGFPADLTNDVARERELTIDEDGFEKAMEEQRQRAREAGQFGTDYNAVIKVESETVFHGYDSTEAKASVVALFREGEEVDALSAGDDAILILDQTPFYAESGGQCGDAGIITVETGKFVVTDTHKIGNAIGHHGKLVEGVLSKADHAMAQVDETRRAAIILNHSATHLLHAALRQVLGEHVTQKGSLVKAENLRFDFSHLEAVKAEELRQVERIVNQQIRLNHTIETDLMDIDAAKEKGAMALFGEKYDDEVRVLSMGEFSTELCGGIHASSTGDIGLFKITSEGGIAAGIRRIEAVTGEAALDAIEAQQKAADKKLNEAASKAKQLEKEIQQLKDKLASQESASLINKVQEIAGTKVLVAQLDGAENKALRGMVDELKNQIGSGIIMLGNVSEGKVGLIAGVTKDLIGQVKAGELVNMVAQQVGGKGGGRPDMAQAGGTDAEALPNALASVEAWLTERL.

4 residues coordinate Zn(2+): His562, His566, Cys664, and His668.

Belongs to the class-II aminoacyl-tRNA synthetase family. Zn(2+) is required as a cofactor.

It localises to the cytoplasm. It carries out the reaction tRNA(Ala) + L-alanine + ATP = L-alanyl-tRNA(Ala) + AMP + diphosphate. Functionally, catalyzes the attachment of alanine to tRNA(Ala) in a two-step reaction: alanine is first activated by ATP to form Ala-AMP and then transferred to the acceptor end of tRNA(Ala). Also edits incorrectly charged Ser-tRNA(Ala) and Gly-tRNA(Ala) via its editing domain. This is Alanine--tRNA ligase from Aliivibrio fischeri (strain ATCC 700601 / ES114) (Vibrio fischeri).